Reading from the N-terminus, the 198-residue chain is Sorcin (198 aa).

EF-hand domains are found at residues 29–64 (GQTQ…SGIA), 70–103 (FNLE…AVLN), 100–135 (AVLN…MGFR), and 134–169 (FRLS…LRAL). Positions 83, 85, 87, 89, 94, 113, 115, 117, 119, and 124 each coordinate Ca(2+).

In terms of assembly, homodimer. Interacts with GCA, RYR2 and ANXA7. As to expression, detected in cardiac myocytes.

The protein resides in the cytoplasm. Its subcellular location is the sarcoplasmic reticulum membrane. Calcium-binding protein that modulates excitation-contraction coupling in the heart. Contributes to calcium homeostasis in the heart sarcoplasmic reticulum. Modulates the activity of RYR2 calcium channels. This chain is Sorcin (SRI), found in Homo sapiens (Human).